Here is a 336-residue protein sequence, read N- to C-terminus: Aspartate--ammonia ligase (336 aa).

Belongs to the class-II aminoacyl-tRNA synthetase family. AsnA subfamily.

The protein resides in the cytoplasm. The catalysed reaction is L-aspartate + NH4(+) + ATP = L-asparagine + AMP + diphosphate + H(+). It functions in the pathway amino-acid biosynthesis; L-asparagine biosynthesis; L-asparagine from L-aspartate (ammonia route): step 1/1. This chain is Aspartate--ammonia ligase, found in Ruminiclostridium cellulolyticum (strain ATCC 35319 / DSM 5812 / JCM 6584 / H10) (Clostridium cellulolyticum).